The following is a 482-amino-acid chain: Pentatricopeptide repeat-containing protein At1g74900, mitochondrial (482 aa).

11 PPR repeats span residues aspartate 90 to proline 124, serine 125 to glutamine 159, aspartate 160 to arginine 190, aspartate 194 to proline 228, asparagine 229 to isoleucine 263, aspartate 264 to proline 298, serine 299 to proline 333, asparagine 334 to proline 368, asparagine 369 to proline 403, asparagine 404 to proline 441, and arginine 442 to leucine 476.

Belongs to the PPR family. P subfamily.

The protein resides in the mitochondrion. Functionally, required for the trans-splicing of intron 1 of the mitochondrial nad1 transcript encoding the ND1 subunit of the mitochondrial membrane respiratory chain NADH dehydrogenase (Complex I). The polypeptide is Pentatricopeptide repeat-containing protein At1g74900, mitochondrial (OTP43) (Arabidopsis thaliana (Mouse-ear cress)).